A 98-amino-acid chain; its full sequence is Co-chaperonin GroES (98 aa).

This sequence belongs to the GroES chaperonin family. As to quaternary structure, heptamer of 7 subunits arranged in a ring. Interacts with the chaperonin GroEL.

It is found in the cytoplasm. Functionally, together with the chaperonin GroEL, plays an essential role in assisting protein folding. The GroEL-GroES system forms a nano-cage that allows encapsulation of the non-native substrate proteins and provides a physical environment optimized to promote and accelerate protein folding. GroES binds to the apical surface of the GroEL ring, thereby capping the opening of the GroEL channel. The protein is Co-chaperonin GroES of Micrococcus luteus (strain ATCC 4698 / DSM 20030 / JCM 1464 / CCM 169 / CCUG 5858 / IAM 1056 / NBRC 3333 / NCIMB 9278 / NCTC 2665 / VKM Ac-2230) (Micrococcus lysodeikticus).